Here is a 1411-residue protein sequence, read N- to C-terminus: DNA-directed RNA polymerase subunit beta' (1411 aa).

Zn(2+)-binding residues include C70, C72, C85, and C88. Mg(2+) contacts are provided by D458, D460, and D462. Residues C813, C887, C894, and C897 each contribute to the Zn(2+) site. Residues 1384-1411 (AEAAEMATTGSDEAPEVEGSGVESGSAE) are disordered.

It belongs to the RNA polymerase beta' chain family. In terms of assembly, the RNAP catalytic core consists of 2 alpha, 1 beta, 1 beta' and 1 omega subunit. When a sigma factor is associated with the core the holoenzyme is formed, which can initiate transcription. Mg(2+) is required as a cofactor. Zn(2+) serves as cofactor.

It catalyses the reaction RNA(n) + a ribonucleoside 5'-triphosphate = RNA(n+1) + diphosphate. In terms of biological role, DNA-dependent RNA polymerase catalyzes the transcription of DNA into RNA using the four ribonucleoside triphosphates as substrates. The protein is DNA-directed RNA polymerase subunit beta' of Paracidovorax citrulli (strain AAC00-1) (Acidovorax citrulli).